The following is a 435-amino-acid chain: Probable aminotransferase gliI (435 aa).

Residue Lys-266 is modified to N6-(pyridoxal phosphate)lysine.

It belongs to the class-I pyridoxal-phosphate-dependent aminotransferase family. Pyridoxal 5'-phosphate is required as a cofactor.

It functions in the pathway mycotoxin biosynthesis. Its function is as follows. Probable aminotransferase; part of the gene cluster that mediates the biosynthesis of gliotoxin, a member of the epipolythiodioxopiperazine (ETP) class of toxins characterized by a disulfide bridged cyclic dipeptide. The first step in gliotoxin biosynthesis is the condensation of serine and phenylalanine to form the cyclo-L-phenylalanyl-L-serine diketopiperazine (DKP) by the NRPS gliP. GliP is also able to produce the DKP cyclo-L-tryptophanyl-L-serine, suggesting that the substrate specificity of the first adenylation (A) domain in gliP is sufficiently relaxed to accommodate both L-Phe and L-Trp. The cytochrome P450 monooxygenase gliC has been shown to catalyze the subsequent hydroxylation of the alpha-carbon of L-Phe in cyclo-L-phenylalanyl-L-serine whereas the second cytochrome P450 enzyme, gliF, is presumably involved in the modification of the DKP side chain. The glutathione S-transferase (GST) gliG then forms a bis-glutathionylated biosynthetic intermediate which is responsible for the sulfurization of gliotoxin. This bis-glutathionylated intermediate is subsequently processed by the gamma-glutamyl cyclotransferase gliK to remove both gamma-glutamyl moieties. Subsequent processing via gliI yields a biosynthetic intermediate, which is N-methylated via the N-methyltransferase gliN, before the gliotoxin oxidoreductase gliT-mediated disulfide bridge closure. GliN-mediated amide methylation confers stability to ETP, damping the spontaneous formation of tri- and tetrasulfides. Intracellular dithiol gliotoxin oxidized by gliT is subsequently effluxed by gliA. Gliotoxin contributes to pathogenesis during invasive aspergillosis. In macrophages and neutrophils, gliotoxin showed inhibition of various different cell functions including cytokine production, antigen presentation, phagocytosis, and production of reactive oxygen species. This chain is Probable aminotransferase gliI, found in Aspergillus fumigatus (strain ATCC MYA-4609 / CBS 101355 / FGSC A1100 / Af293) (Neosartorya fumigata).